The chain runs to 477 residues: MPPSDTQSPAANNAHEFSVSEISFALKKTVEETFGHVRVRGEITGYRGPHSSGHCYFGLKDDKARMDAVIWKGNFGKLRFKPEEGMEVIATGKLTTYPGSSKYQIVIDHLEPAGVGALMALLEERRKKLAAEGLFAAERKRALPFLPEVIGVVTSPTGAVIRDILHRLQDRFPRHVIVWPVRVQGETSAAEVAAAIRGFNAMEKGGKTPRPDLLIIARGGGSIEDLWSFNEEIVVRAAAESAIPLISAIGHETDTTLIDFASDRRAPTPTAAAEMAVPVRAELLADVRDKGSRLIRCEARAIESYRTQLGGLARGLPKLQDLVALPRQRFDTAADRLGRALIRAAEVKRARLSRVEGRLSDRPIRLRIANERKGLPQLLQRLTRAETRRVADLARSLDGSTKLLESYSYHGVLKRGYAVVRDETGKPIRAGAGQTAGARIEIEFAEDRLDAVVAPGGTVAPRKAPPKKPGGGQGSLL.

The tract at residues Gly456–Leu477 is disordered.

Belongs to the XseA family. As to quaternary structure, heterooligomer composed of large and small subunits.

It localises to the cytoplasm. The enzyme catalyses Exonucleolytic cleavage in either 5'- to 3'- or 3'- to 5'-direction to yield nucleoside 5'-phosphates.. In terms of biological role, bidirectionally degrades single-stranded DNA into large acid-insoluble oligonucleotides, which are then degraded further into small acid-soluble oligonucleotides. This Parvibaculum lavamentivorans (strain DS-1 / DSM 13023 / NCIMB 13966) protein is Exodeoxyribonuclease 7 large subunit.